Here is a 336-residue protein sequence, read N- to C-terminus: Cell division protein ZipA (336 aa).

Residues 1–6 (MEDLQL) are Periplasmic-facing. The chain crosses the membrane as a helical span at residues 7–27 (VLFVLGAIAIIAVLVHGFWSI). Over 28-336 (RKQQPKPIKE…DYLRRIKAIV (309 aa)) the chain is Cytoplasmic. 2 disordered regions span residues 31–118 (QPKP…PVRA) and 174–200 (YGATTQASPQPASPVQSQAPREPEPLG). Polar residues predominate over residues 73 to 91 (LPSSRNHTSVPVMTLQKAS). The span at 108–118 (TTAERAEPVRA) shows a compositional bias: basic and acidic residues. The segment covering 179–193 (QASPQPASPVQSQAP) has biased composition (low complexity).

It belongs to the ZipA family. In terms of assembly, interacts with FtsZ via their C-terminal domains.

The protein resides in the cell inner membrane. Functionally, essential cell division protein that stabilizes the FtsZ protofilaments by cross-linking them and that serves as a cytoplasmic membrane anchor for the Z ring. Also required for the recruitment to the septal ring of downstream cell division proteins. This Shewanella denitrificans (strain OS217 / ATCC BAA-1090 / DSM 15013) protein is Cell division protein ZipA.